Here is a 271-residue protein sequence, read N- to C-terminus: 3-methyl-2-oxobutanoate hydroxymethyltransferase 2 (271 aa).

Positions 53 and 92 each coordinate Mg(2+). 3-methyl-2-oxobutanoate contacts are provided by residues 53–54 (DS), aspartate 92, and lysine 120. Mg(2+) is bound at residue glutamate 122. The Proton acceptor role is filled by glutamate 189.

It belongs to the PanB family. In terms of assembly, homodecamer; pentamer of dimers. The cofactor is Mg(2+).

Its subcellular location is the cytoplasm. The catalysed reaction is 3-methyl-2-oxobutanoate + (6R)-5,10-methylene-5,6,7,8-tetrahydrofolate + H2O = 2-dehydropantoate + (6S)-5,6,7,8-tetrahydrofolate. Its pathway is cofactor biosynthesis; (R)-pantothenate biosynthesis; (R)-pantoate from 3-methyl-2-oxobutanoate: step 1/2. Functionally, catalyzes the reversible reaction in which hydroxymethyl group from 5,10-methylenetetrahydrofolate is transferred onto alpha-ketoisovalerate to form ketopantoate. The chain is 3-methyl-2-oxobutanoate hydroxymethyltransferase 2 from Burkholderia lata (strain ATCC 17760 / DSM 23089 / LMG 22485 / NCIMB 9086 / R18194 / 383).